The chain runs to 253 residues: 5'-nucleotidase SurE (253 aa).

Asp8, Asp9, Ser40, and Asn97 together coordinate a divalent metal cation.

The protein belongs to the SurE nucleotidase family. Requires a divalent metal cation as cofactor.

It is found in the cytoplasm. The catalysed reaction is a ribonucleoside 5'-phosphate + H2O = a ribonucleoside + phosphate. Nucleotidase that shows phosphatase activity on nucleoside 5'-monophosphates. In Desulforamulus reducens (strain ATCC BAA-1160 / DSM 100696 / MI-1) (Desulfotomaculum reducens), this protein is 5'-nucleotidase SurE.